A 403-amino-acid chain; its full sequence is Argininosuccinate synthase (403 aa).

Residue 8-16 coordinates ATP; the sequence is AYSGGLDTS. Tyr87 serves as a coordination point for L-citrulline. ATP is bound at residue Gly117. L-aspartate contacts are provided by Thr119, Asn123, and Asp124. Position 123 (Asn123) interacts with L-citrulline. L-citrulline-binding residues include Arg127, Ser175, Glu259, and Tyr271.

This sequence belongs to the argininosuccinate synthase family. Type 1 subfamily. As to quaternary structure, homotetramer.

Its subcellular location is the cytoplasm. The enzyme catalyses L-citrulline + L-aspartate + ATP = 2-(N(omega)-L-arginino)succinate + AMP + diphosphate + H(+). The protein operates within amino-acid biosynthesis; L-arginine biosynthesis; L-arginine from L-ornithine and carbamoyl phosphate: step 2/3. In Salinispora arenicola (strain CNS-205), this protein is Argininosuccinate synthase.